Consider the following 107-residue polypeptide: uncharacterized protein (107 aa).

This is an uncharacterized protein from Methanocaldococcus jannaschii (strain ATCC 43067 / DSM 2661 / JAL-1 / JCM 10045 / NBRC 100440) (Methanococcus jannaschii).